The primary structure comprises 1366 residues: DNA-directed RNA polymerase subunit beta (1366 aa).

It belongs to the RNA polymerase beta chain family. As to quaternary structure, the RNAP catalytic core consists of 2 alpha, 1 beta, 1 beta' and 1 omega subunit. When a sigma factor is associated with the core the holoenzyme is formed, which can initiate transcription.

The catalysed reaction is RNA(n) + a ribonucleoside 5'-triphosphate = RNA(n+1) + diphosphate. In terms of biological role, DNA-dependent RNA polymerase catalyzes the transcription of DNA into RNA using the four ribonucleoside triphosphates as substrates. The sequence is that of DNA-directed RNA polymerase subunit beta from Marinomonas sp. (strain MWYL1).